Reading from the N-terminus, the 702-residue chain is Dissimilatory sulfite reductase MccA (702 aa).

The N-terminal stretch at 1 to 39 is a signal peptide; the sequence is MLSGWSVLKGGNMKYWDKALLSLFMCVSTLSIAATHAVA. Cys155, Cys158, His159, and His171 together coordinate heme c. Substrate-binding residues include Lys220 and Tyr297. Heme c is bound by residues Cys314, Cys317, His318, Cys351, Cys354, His355, His360, Cys372, Cys375, and His376. A substrate-binding site is contributed by Arg378. Residue Cys411 coordinates Cu(+). Heme c contacts are provided by His423, Cys430, Cys433, His434, His437, Cys474, Cys477, His478, His491, Cys496, Cys499, and His500. Cu(+) is bound at residue Cys507. Heme c-binding residues include His528, Cys574, Cys590, His591, and His675.

This sequence belongs to the multiheme cytochrome c family. In terms of assembly, homotrimer. It depends on Cu(+) as a cofactor. Heme c serves as cofactor.

It is found in the periplasm. The enzyme catalyses [protein]-disulfide + hydrogen sulfide + 2 A + 3 H2O = [protein]-dithiol + sulfite + 2 AH2 + H(+). It functions in the pathway sulfur metabolism; sulfite reduction. Its function is as follows. Respiratory sulfite reductase that catalyzes the reduction of sulfite to sulfide in a single step, consuming six electrons in the process. Required for sulfite respiration under anaerobic growth conditions. Has only marginal activity with nitrite. In Wolinella succinogenes (strain ATCC 29543 / DSM 1740 / CCUG 13145 / JCM 31913 / LMG 7466 / NCTC 11488 / FDC 602W) (Vibrio succinogenes), this protein is Dissimilatory sulfite reductase MccA.